We begin with the raw amino-acid sequence, 296 residues long: Large ribosomal subunit protein uL15m (296 aa).

Residues 1–20 (MAASGGSGGKATELLRCLPR) constitute a mitochondrion transit peptide. Residues 25-66 (NLRPNPGARHREKRRGRGIHGGRKSGRGHKGETQRGNQPRLG) form a disordered region. Residues 32–52 (ARHREKRRGRGIHGGRKSGRG) are compositionally biased toward basic residues.

It belongs to the universal ribosomal protein uL15 family. In terms of assembly, component of the mitochondrial ribosome large subunit (39S) which comprises a 16S rRNA and about 50 distinct proteins.

It is found in the mitochondrion. The protein is Large ribosomal subunit protein uL15m (mrpl15) of Xenopus laevis (African clawed frog).